A 262-amino-acid chain; its full sequence is Phosphatidylserine decarboxylase proenzyme (262 aa).

Residues D86, H142, and S226 each act as charge relay system; for autoendoproteolytic cleavage activity in the active site. Residue S226 is the Schiff-base intermediate with substrate; via pyruvic acid; for decarboxylase activity of the active site. The residue at position 226 (S226) is a Pyruvic acid (Ser); by autocatalysis.

It belongs to the phosphatidylserine decarboxylase family. PSD-B subfamily. Prokaryotic type I sub-subfamily. As to quaternary structure, heterodimer of a large membrane-associated beta subunit and a small pyruvoyl-containing alpha subunit. The cofactor is pyruvate. In terms of processing, is synthesized initially as an inactive proenzyme. Formation of the active enzyme involves a self-maturation process in which the active site pyruvoyl group is generated from an internal serine residue via an autocatalytic post-translational modification. Two non-identical subunits are generated from the proenzyme in this reaction, and the pyruvate is formed at the N-terminus of the alpha chain, which is derived from the carboxyl end of the proenzyme. The autoendoproteolytic cleavage occurs by a canonical serine protease mechanism, in which the side chain hydroxyl group of the serine supplies its oxygen atom to form the C-terminus of the beta chain, while the remainder of the serine residue undergoes an oxidative deamination to produce ammonia and the pyruvoyl prosthetic group on the alpha chain. During this reaction, the Ser that is part of the protease active site of the proenzyme becomes the pyruvoyl prosthetic group, which constitutes an essential element of the active site of the mature decarboxylase.

The protein localises to the cell membrane. It carries out the reaction a 1,2-diacyl-sn-glycero-3-phospho-L-serine + H(+) = a 1,2-diacyl-sn-glycero-3-phosphoethanolamine + CO2. The protein operates within phospholipid metabolism; phosphatidylethanolamine biosynthesis; phosphatidylethanolamine from CDP-diacylglycerol: step 2/2. In terms of biological role, catalyzes the formation of phosphatidylethanolamine (PtdEtn) from phosphatidylserine (PtdSer). The chain is Phosphatidylserine decarboxylase proenzyme from Bacillus thuringiensis (strain Al Hakam).